Reading from the N-terminus, the 585-residue chain is Arginine--tRNA ligase (585 aa).

A 'HIGH' region motif is present at residues 126 to 136 (PNIAKEMHVGH).

This sequence belongs to the class-I aminoacyl-tRNA synthetase family. As to quaternary structure, monomer.

It localises to the cytoplasm. The enzyme catalyses tRNA(Arg) + L-arginine + ATP = L-arginyl-tRNA(Arg) + AMP + diphosphate. The sequence is that of Arginine--tRNA ligase from Cyanothece sp. (strain PCC 7425 / ATCC 29141).